Consider the following 93-residue polypeptide: MMNLLNKSLEENGSVLTAFYIFVAFVALYLLGRALQAFVQAADACCLFWYTWVVVPGAKGTTFVYKHTYGKKLNKPELETVIVNEFPKNGWKQ.

At 1 to 11 (MMNLLNKSLEE) the chain is on the virion surface side. The chain crosses the membrane as a helical span at residues 12 to 32 (NGSVLTAFYIFVAFVALYLLG). Residues 33–93 (RALQAFVQAA…NEFPKNGWKQ (61 aa)) lie on the Intravirion side of the membrane.

Belongs to the gammacoronaviruses E protein family. Homooligomer. Interacts with the M membrane protein in the budding compartment of the host cell, which is located between endoplasmic reticulum and the Golgi complex. The cytoplasmic tails of both proteins are important for this function. Interacts with Nucleoprotein.

Its subcellular location is the host Golgi apparatus membrane. Functionally, plays a central role in virus morphogenesis and assembly. Acts as a viroporin and self-assembles in host membranes forming pentameric protein-lipid pores that allow ion transport. Also plays a role in the induction of apoptosis. The chain is Envelope small membrane protein from Avian infectious bronchitis virus (strain Portugal/322/82) (IBV).